The following is an 86-amino-acid chain: Allergen Hum j 3 (86 aa).

This is Allergen Hum j 3 from Humulus japonicus (Japanese hop).